Consider the following 430-residue polypeptide: Serine/threonine transporter SstT (430 aa).

9 helical membrane-spanning segments follow: residues 24-44 (IIVG…VTWI), 47-67 (FGTL…FVLV), 82-102 (FGTV…VAVL), 144-164 (AIID…GLAM), 186-206 (VIRW…FTNV), 223-243 (LLVG…IFIF), 294-314 (IPLG…IMAM), 320-340 (LGIQ…ALGA), and 361-381 (FGIS…IGVI).

This sequence belongs to the dicarboxylate/amino acid:cation symporter (DAACS) (TC 2.A.23) family.

Its subcellular location is the cell membrane. The catalysed reaction is L-serine(in) + Na(+)(in) = L-serine(out) + Na(+)(out). The enzyme catalyses L-threonine(in) + Na(+)(in) = L-threonine(out) + Na(+)(out). Functionally, involved in the import of serine and threonine into the cell, with the concomitant import of sodium (symport system). The protein is Serine/threonine transporter SstT of Bifidobacterium adolescentis (strain ATCC 15703 / DSM 20083 / NCTC 11814 / E194a).